Consider the following 178-residue polypeptide: Large ribosomal subunit protein uL6 (178 aa).

The protein belongs to the universal ribosomal protein uL6 family. In terms of assembly, part of the 50S ribosomal subunit.

In terms of biological role, this protein binds to the 23S rRNA, and is important in its secondary structure. It is located near the subunit interface in the base of the L7/L12 stalk, and near the tRNA binding site of the peptidyltransferase center. This Corynebacterium diphtheriae (strain ATCC 700971 / NCTC 13129 / Biotype gravis) protein is Large ribosomal subunit protein uL6.